Here is a 121-residue protein sequence, read N- to C-terminus: Peptidyl-tRNA hydrolase (121 aa).

This sequence belongs to the PTH2 family.

The protein localises to the cytoplasm. It catalyses the reaction an N-acyl-L-alpha-aminoacyl-tRNA + H2O = an N-acyl-L-amino acid + a tRNA + H(+). In terms of biological role, the natural substrate for this enzyme may be peptidyl-tRNAs which drop off the ribosome during protein synthesis. The polypeptide is Peptidyl-tRNA hydrolase (Staphylothermus marinus (strain ATCC 43588 / DSM 3639 / JCM 9404 / F1)).